The following is a 217-amino-acid chain: Large ribosomal subunit protein uL3 (217 aa).

A compositionally biased stretch (polar residues) spans 133-145 (GRASHGNSRSHNV). Residues 133–153 (GRASHGNSRSHNVPGSIGMAQ) are disordered. At glutamine 153 the chain carries N5-methylglutamine.

The protein belongs to the universal ribosomal protein uL3 family. In terms of assembly, part of the 50S ribosomal subunit. Forms a cluster with proteins L14 and L19. In terms of processing, methylated by PrmB.

Its function is as follows. One of the primary rRNA binding proteins, it binds directly near the 3'-end of the 23S rRNA, where it nucleates assembly of the 50S subunit. The protein is Large ribosomal subunit protein uL3 of Ralstonia pickettii (strain 12J).